The following is a 317-amino-acid chain: Ribosomal lysine N-methyltransferase 5 (317 aa).

S-adenosyl-L-methionine-binding positions include W87, 141 to 143 (GSG), D163, W214, and L237.

Belongs to the class I-like SAM-binding methyltransferase superfamily. RKM5 family.

S-adenosyl-L-methionine-dependent protein-lysine N-methyltransferase that methylates 60S ribosomal protein L1. This chain is Ribosomal lysine N-methyltransferase 5 (RKM5), found in Eremothecium gossypii (strain ATCC 10895 / CBS 109.51 / FGSC 9923 / NRRL Y-1056) (Yeast).